Reading from the N-terminus, the 450-residue chain is Phosphoglucosamine mutase (450 aa).

The active-site Phosphoserine intermediate is the S102. Mg(2+) contacts are provided by S102, D244, D246, and D248. At S102 the chain carries Phosphoserine.

The protein belongs to the phosphohexose mutase family. Requires Mg(2+) as cofactor. Activated by phosphorylation.

It carries out the reaction alpha-D-glucosamine 1-phosphate = D-glucosamine 6-phosphate. Functionally, catalyzes the conversion of glucosamine-6-phosphate to glucosamine-1-phosphate. In Solidesulfovibrio magneticus (strain ATCC 700980 / DSM 13731 / RS-1) (Desulfovibrio magneticus), this protein is Phosphoglucosamine mutase.